A 335-amino-acid chain; its full sequence is MAENENHVLSIRMSHPYYSEKEISRILSTRDPKENNLRMQAFAWISTLSKTLKFPVRTSGLAMLLYSRFQLFFPVNEIPLLECATACLVVASKIEDTAKKFRDILLAHYLQKHPGSEVDAHSQVCYKLIEENKKRILGLERMTLELICFDFRVRHPHNYMVKFAKSLKFSSSTASIAWNVCTDAYKTYTMLKYPAHIVAVASISIACKLQQLPQPIIPRSFFAPPALTEAVIADILDLYMHYQPHTCIGNMYTTEKLLGLCVDFQRAQKNSGRPQKPPQIDPHSSSLADEYRESNKRLQESKESCARFILDCDRKYFNTEFEKRMLEERRNKGTV.

Cyclin N-terminal domains follow at residues 26–151 (ILST…CFDF) and 158–241 (NYMV…LYMH). The segment at 269 to 293 (KNSGRPQKPPQIDPHSSSLADEYRE) is disordered.

It belongs to the cyclin family. In terms of assembly, CTDK-I consists of three subunits, ctk1/lsk1, ctk2/lsc1 and ctk3 (also called alpha, beta and gamma). Interacts with ctk1/lsk1. This interaction is dependent on ctk1/lsk1 kinase activity.

The protein resides in the cytoplasm. The protein localises to the nucleus. Cyclin subunit of the CTDK-I complex, which hyperphosphorylates the C-terminal heptapeptide repeat domain (CTD) of the largest RNA polymerase II subunit. As part of the CTDK-I complex, involved in RNA polymerase II transcriptional elongation and pre-mRNA 3'-end processing. Together with ctk3, required for ctk1/lsk1 CTD kinase activation. Together with ctk1/lsk1, required for the regulation of cytokinesis by phosphorylating 'Ser-2' residues found in the heptad repeats of the CTD. The protein is CTD kinase subunit beta (lsc1) of Schizosaccharomyces pombe (strain 972 / ATCC 24843) (Fission yeast).